A 129-amino-acid chain; its full sequence is MAKAPIRARKRVRKTVSDGVAHIHASFNNTIVTITDRQGNALGWATAGGSGFRGSRKSTPFAAQVAAERCAEAVKEYGIKNLEVMVKGPGPGRESTIRALNAAGFRITNITDVTPIPHNGCRPPKKRRV.

The protein belongs to the universal ribosomal protein uS11 family. Part of the 30S ribosomal subunit. Interacts with proteins S7 and S18. Binds to IF-3.

Its function is as follows. Located on the platform of the 30S subunit, it bridges several disparate RNA helices of the 16S rRNA. Forms part of the Shine-Dalgarno cleft in the 70S ribosome. This chain is Small ribosomal subunit protein uS11, found in Yersinia pseudotuberculosis serotype O:1b (strain IP 31758).